A 332-amino-acid chain; its full sequence is D-lactate dehydrogenase (332 aa).

NAD(+) is bound by residues 155–156, D175, 206–207, N212, and 233–235; these read RI, VP, and FAR. Active-site residues include R235 and E264. The Proton donor role is filled by H296.

The protein belongs to the D-isomer specific 2-hydroxyacid dehydrogenase family. In terms of assembly, homodimer.

The catalysed reaction is (R)-lactate + NAD(+) = pyruvate + NADH + H(+). The protein is D-lactate dehydrogenase of Lactiplantibacillus pentosus (Lactobacillus pentosus).